We begin with the raw amino-acid sequence, 599 residues long: Translation initiation factor IF-2 (599 aa).

One can recognise a tr-type G domain in the interval 111–278 (PRPPIITVMG…SILLLAEILE (168 aa)). Positions 120–127 (GHVDHGKT) are G1. GTP is bound at residue 120-127 (GHVDHGKT). The G2 stretch occupies residues 145 to 149 (GITQH). The G3 stretch occupies residues 166-169 (DTPG). GTP contacts are provided by residues 166–170 (DTPGH) and 220–223 (NKMD). Residues 220–223 (NKMD) form a G4 region. A G5 region spans residues 256–258 (SAL).

The protein belongs to the TRAFAC class translation factor GTPase superfamily. Classic translation factor GTPase family. IF-2 subfamily.

The protein resides in the cytoplasm. One of the essential components for the initiation of protein synthesis. Protects formylmethionyl-tRNA from spontaneous hydrolysis and promotes its binding to the 30S ribosomal subunits. Also involved in the hydrolysis of GTP during the formation of the 70S ribosomal complex. The chain is Translation initiation factor IF-2 from Mesomycoplasma hyopneumoniae (strain 232) (Mycoplasma hyopneumoniae).